The primary structure comprises 187 residues: UPF0301 protein HS_0009 (187 aa).

Belongs to the UPF0301 (AlgH) family.

This is UPF0301 protein HS_0009 from Histophilus somni (strain 129Pt) (Haemophilus somnus).